We begin with the raw amino-acid sequence, 496 residues long: E3 ubiquitin-protein ligase Hakai (496 aa).

Positions 35–60 are disordered; sequence PNKIKPAPRPQRNMNRIPTKPQPGFD. An RING-type; degenerate zinc finger spans residues 104–144; that stretch reads CDKCGLPIKIYGRMIPCKHVFCYDCALMHEKKADKLCPGTL. Residues 157 to 215 form an HYB domain region; the sequence is CNDPVQRIEQCARGSLFMCSIVQGCKRTYLSQRDLQAHINHRHMRASKPTARPQPEPIH. Residues 173–199 form a C2H2-type zinc finger; the sequence is FMCSIVQGCKRTYLSQRDLQAHINHRH. Polar residues predominate over residues 304-314; that stretch reads VPIQDDSNSGA. The interval 304–496 is disordered; the sequence is VPIQDDSNSG…DQARYRPYYQ (193 aa). Pro residues-rich tracts occupy residues 350–360, 380–397, and 407–430; these read APPPPPPPPIS, GPPP…PPPG, and MNHP…PPHH. Polar residues predominate over residues 434-449; that stretch reads SSMPQFNEDQGTLSPP. The segment covering 464–483 has biased composition (pro residues); it reads PRGPPPRMQGPPSQAPMPGP.

Belongs to the Hakai family. Homodimer. Interacts with tyrosine-phosphorylated SRC substrates. Component of the WMM complex, a N6-methyltransferase complex composed of a catalytic subcomplex, named MAC, and of an associated subcomplex, named MACOM. Component of the MACOM subcomplex.

The protein localises to the nucleus speckle. The protein resides in the nucleus. It localises to the nucleoplasm. The enzyme catalyses S-ubiquitinyl-[E2 ubiquitin-conjugating enzyme]-L-cysteine + [acceptor protein]-L-lysine = [E2 ubiquitin-conjugating enzyme]-L-cysteine + N(6)-ubiquitinyl-[acceptor protein]-L-lysine.. It participates in protein modification; protein ubiquitination. E3 ubiquitin-protein ligase that mediates ubiquitination of several tyrosine-phosphorylated Src substrates. Associated component of the WMM complex, a complex that mediates N6-methyladenosine (m6A) methylation of RNAs, a modification that plays a role in the efficiency of mRNA splicing and RNA processing. This is E3 ubiquitin-protein ligase Hakai from Xenopus laevis (African clawed frog).